Consider the following 493-residue polypeptide: MIQAKTHVFWFVTGSQHLYGEEAVQEVEEHSKMICNGLNDGDLRFQVEYKAVATSLDGVRKLFEEANRDEECAGIITWMHTFSPAKMWIPGLSELNKPLLHFHTQFNRDIPWDKIDMDFMNINQSAHGDREYGFIGARLGIPRKVIAGYWEDREVKRSIDKWMSAAVAYIESRHIKVARFGDNMRNVAVTEGDKIEAQIQLGWSVDGYGIGDLVTEINAVSEQSLSELISEYEELYEWPEGEAARESVKEQARIELGLKRFLSSGGYTAFTTTFEDLHGMKQLPGLAVQRLMAEGYGFGGEGDWKTAALVRMMKMMAGGKETSFMEDYTYHFEPGNEMILGSHMLEVCPSIAEHKPRIEVHPLSMGAKDDPARLVFDGIAGPAVNVSLIDLGGRFRLVINKVEAVKVPHDMPNLPVARVLWKPQPSLRTSAEAWILAGGAHHTCLSYQLTAEQMLDWAEMSGIEAVLINRDTTILNLRNELKWSEAAYRLRKF.

Residues glutamate 301, glutamate 326, histidine 343, and histidine 442 each coordinate Mn(2+).

The protein belongs to the arabinose isomerase family. Mn(2+) is required as a cofactor.

The enzyme catalyses beta-L-arabinopyranose = L-ribulose. The protein operates within carbohydrate degradation; L-arabinose degradation via L-ribulose; D-xylulose 5-phosphate from L-arabinose (bacterial route): step 1/3. Catalyzes the conversion of L-arabinose to L-ribulose. This Bacillus licheniformis (strain ATCC 14580 / DSM 13 / JCM 2505 / CCUG 7422 / NBRC 12200 / NCIMB 9375 / NCTC 10341 / NRRL NRS-1264 / Gibson 46) protein is L-arabinose isomerase 1.